The chain runs to 380 residues: Sialidase-2 (380 aa).

An FRIP motif motif is present at residues 20–23 (YRIP). 2 residues coordinate substrate: Arg-21 and Arg-41. Asp-46 serves as the catalytic Proton acceptor. One copy of the BNR 1 repeat lies at 127 to 138 (VTSTDHGRTWSS). Tyr-179 and Tyr-181 together coordinate substrate. One copy of the BNR 2 repeat lies at 197–208 (FLSHDHGRTWAR). 3 residues coordinate substrate: Glu-218, Arg-237, and Arg-304. Tyr-334 (nucleophile) is an active-site residue. Glu-355 is a catalytic residue.

The protein belongs to the glycosyl hydrolase 33 family. As to expression, expressed in skeletal muscle, fetal liver and embryonic carcinoma cell line NT2-D1.

Its subcellular location is the cytoplasm. It is found in the cytosol. It catalyses the reaction Hydrolysis of alpha-(2-&gt;3)-, alpha-(2-&gt;6)-, alpha-(2-&gt;8)- glycosidic linkages of terminal sialic acid residues in oligosaccharides, glycoproteins, glycolipids, colominic acid and synthetic substrates.. The enzyme catalyses a ganglioside GD1a + H2O = a ganglioside GM1 + N-acetylneuraminate. The catalysed reaction is a ganglioside GM1 + H2O = a ganglioside GA1 + N-acetylneuraminate. It carries out the reaction a ganglioside GT1b + H2O = a ganglioside GD1b + N-acetylneuraminate. It catalyses the reaction a ganglioside GD1b + H2O = a ganglioside GM1 + N-acetylneuraminate. The enzyme catalyses a ganglioside GD3 + H2O = a ganglioside GM3 + N-acetylneuraminate. The catalysed reaction is a ganglioside GM3 + H2O = a beta-D-galactosyl-(1-&gt;4)-beta-D-glucosyl-(1&lt;-&gt;1)-ceramide + N-acetylneuraminate. It carries out the reaction a ganglioside GM2 + H2O = a ganglioside GA2 + N-acetylneuraminate. It catalyses the reaction a neolactoside IV(3)-alpha-NeuAc-nLc4Cer(d18:1(4E)) + H2O = a neolactoside nLc4Cer(d18:1(4E)) + N-acetylneuraminate. The enzyme catalyses N-acetyl-alpha-neuraminosyl-(2-&gt;3)-beta-D-galactosyl-(1-&gt;4)-D-glucose + H2O = lactose + N-acetylneuraminate. Functionally, exo-alpha-sialidase that catalyzes the hydrolytic cleavage of the terminal sialic acid (N-acetylneuraminic acid, Neu5Ac) of a glycan moiety in the catabolism of glycolipids, glycoproteins and oligosacharides. Recognizes sialyl linkage positions of the glycan moiety as well as the supramolecular organization of the sialoglycoconjugate. Displays preference for alpha-(2-&gt;3)-sialylated GD1a and GT1B gangliosides over alpha-(2-&gt;8)-sialylated GD1b, in both monomeric forms and micelles. Hydrolyzes monomeric GM1 ganglioside, but has no activity toward the miscellar form. Has lower sialidase activity for glycoproteins such as fetuin and TF/transferrin that carry a mixture of alpha-(2-&gt;3) and alpha-(2-&gt;6)-sialyl linkages. Cleaves milk oligosaccharide alpha-(2-&gt;3)-sialyllactose, but is inactive toward alpha-(2-&gt;6)-sialyllactose isomer. Has no activity toward colominic acid, a homomer of alpha-(2-&gt;8)-linked Neu5Ac residues. In Homo sapiens (Human), this protein is Sialidase-2 (NEU2).